The chain runs to 279 residues: Dermonecrotic toxin LrSicTox-alphaIA1i (279 aa).

His-11 is a catalytic residue. The Mg(2+) site is built by Glu-31 and Asp-33. Catalysis depends on His-47, which acts as the Nucleophile. Disulfide bonds link Cys-51-Cys-57 and Cys-53-Cys-196. Residue Asp-91 coordinates Mg(2+). Residue Asn-256 is glycosylated (N-linked (GlcNAc...) asparagine).

This sequence belongs to the arthropod phospholipase D family. Class II subfamily. Mg(2+) serves as cofactor. In terms of tissue distribution, expressed by the venom gland.

The protein localises to the secreted. It carries out the reaction an N-(acyl)-sphingosylphosphocholine = an N-(acyl)-sphingosyl-1,3-cyclic phosphate + choline. The catalysed reaction is an N-(acyl)-sphingosylphosphoethanolamine = an N-(acyl)-sphingosyl-1,3-cyclic phosphate + ethanolamine. The enzyme catalyses a 1-acyl-sn-glycero-3-phosphocholine = a 1-acyl-sn-glycero-2,3-cyclic phosphate + choline. It catalyses the reaction a 1-acyl-sn-glycero-3-phosphoethanolamine = a 1-acyl-sn-glycero-2,3-cyclic phosphate + ethanolamine. With respect to regulation, inhibited with low affinity by edelfosine. Its function is as follows. Dermonecrotic toxins cleave the phosphodiester linkage between the phosphate and headgroup of certain phospholipids (sphingolipid and lysolipid substrates), forming an alcohol (often choline) and a cyclic phosphate. This toxin acts on sphingomyelin (SM). It also acts on a broad range of lysophospholipids, like lysophosphatidylinositol (LPI), lysophosphatidylglycerol (LPG), lysophosphatidylethanolamine (LPE), lysobisphosphatidic acid (LBPA), lysophosphatidylserine (LPS) and lysophosphatidylcholines (LPC) of varying chain lengths. The substrate preference is LPI &gt; LPG &gt; LPS &gt; LPC &gt;&gt; LPE, LBPA. Furthermore, the enzyme also act on cyclic phosphatidic acid and lyso-platelet activating factor (LPAF, an alkyl-LPC). The enzyme does not act on sphingosylphosphorylcholine (SPC, also known as lyso-sphingomyelin) and PAF. The toxin may also act on ceramide phosphoethanolamine (CPE). It acts by transphosphatidylation, releasing exclusively cyclic phosphate products as second products. It does not exhibit detectable PLA1/2 activity. It induces dose-dependent hemolysis and dermonecrosis. Also induces increased vascular permeability, edema, inflammatory response, and platelet aggregation. This chain is Dermonecrotic toxin LrSicTox-alphaIA1i, found in Loxosceles reclusa (Brown recluse spider).